The following is a 1032-amino-acid chain: Vacuolar membrane protease (1032 aa).

The Cytoplasmic portion of the chain corresponds to 1-11 (MRFQNPFAFRP). The chain crosses the membrane as a helical span at residues 12–32 (GPVSFWTTVIYLALVIPLIYV). Over 33–426 (HETVPPAPSD…AWAVFALRGL (394 aa)) the chain is Vacuolar. Residues Asn50 and Asn142 are each glycosylated (N-linked (GlcNAc...) asparagine). Zn(2+) contacts are provided by His207 and Asp219. The active-site Proton acceptor is Glu253. Positions 254, 279, and 352 each coordinate Zn(2+). A helical membrane pass occupies residues 427–447 (FAWSLTLLVATPLILVAITYI). The Cytoplasmic segment spans residues 448–482 (LARKDKYYFFSRDIKMHHDINDDPVVLGGWKGFLR). A helical membrane pass occupies residues 483–503 (FPFALVFAGALTIASTLLLAK). The Vacuolar portion of the chain corresponds to 504 to 511 (FNPLIIYS). Residues 512–532 (SPYAVWSMTLSIFYFSFWLIM) traverse the membrane as a helical segment. The Cytoplasmic segment spans residues 533-545 (RGASFIRPSALHR). Residues 546 to 566 (GYVLIWLFALGWGLQVVGAVA) form a helical membrane-spanning segment. The Vacuolar segment spans residues 567-573 (EDRLHIA). Residues 574–594 (ALYATVFLQSAVFLALFISLL) traverse the membrane as a helical segment. The Cytoplasmic segment spans residues 595-708 (EQFALLGKHD…WSGRLPSWTW (114 aa)). Positions 616-631 (RDISSHGTDHESRPQP) are enriched in basic and acidic residues. The interval 616 to 666 (RDISSHGTDHESRPQPEEEPAQPEGDEDESEDATETTPLRANEPGYGSSTR) is disordered. Positions 632-649 (EEEPAQPEGDEDESEDAT) are enriched in acidic residues. Residues 709–729 (IIQFLLLAPVPVILFGNLGLV) traverse the membrane as a helical segment. Residues 730–745 (AMSALQMTGTDGGSLL) lie on the Vacuolar side of the membrane. The chain crosses the membrane as a helical span at residues 746–766 (VPVLTLGIVSIFLLLPLTPFI). Topologically, residues 767-773 (HRVSHHV) are cytoplasmic. A helical membrane pass occupies residues 774–794 (PMFLLCVFAGTFIYNLVAFPF). Topologically, residues 795–1032 (SDSHRFKFYF…LVEVRKTYKV (238 aa)) are vacuolar. Residues Asn812 and Asn884 are each glycosylated (N-linked (GlcNAc...) asparagine).

It belongs to the peptidase M28 family. Requires Zn(2+) as cofactor.

It localises to the vacuole membrane. In terms of biological role, may be involved in vacuolar sorting and osmoregulation. The protein is Vacuolar membrane protease of Fusarium vanettenii (strain ATCC MYA-4622 / CBS 123669 / FGSC 9596 / NRRL 45880 / 77-13-4) (Fusarium solani subsp. pisi).